We begin with the raw amino-acid sequence, 449 residues long: Putative methylthiotransferase MJ0865 (449 aa).

The 228-residue stretch at 163–390 folds into the Radical SAM core domain; that stretch reads SIRGANVYIE…EGEYRKLGLS (228 aa). Cys-177, Cys-181, and Cys-184 together coordinate [4Fe-4S] cluster.

Belongs to the methylthiotransferase family. [4Fe-4S] cluster is required as a cofactor.

The chain is Putative methylthiotransferase MJ0865 from Methanocaldococcus jannaschii (strain ATCC 43067 / DSM 2661 / JAL-1 / JCM 10045 / NBRC 100440) (Methanococcus jannaschii).